Reading from the N-terminus, the 114-residue chain is C-X-C motif chemokine 6 (114 aa).

The signal sequence occupies residues 1-37; it reads MSLPSSRAARVPGPSGSLCALLALLLLLTPPGPLASA. 2 cysteine pairs are disulfide-bonded: Cys49-Cys75 and Cys51-Cys91.

Belongs to the intercrine alpha (chemokine CxC) family.

It localises to the secreted. In terms of biological role, chemotactic for neutrophil granulocytes. Signals through binding and activation of its receptors (CXCR1 and CXCR2). In addition to its chemotactic and angiogenic properties, it has strong antibacterial activity against Gram-positive and Gram-negative bacteria (90-fold-higher when compared to CXCL5 and CXCL7). The sequence is that of C-X-C motif chemokine 6 (CXCL6) from Homo sapiens (Human).